Reading from the N-terminus, the 53-residue chain is Small ribosomal subunit protein uS14 (53 aa).

Zn(2+) contacts are provided by Cys18, Cys21, Cys36, and Cys39.

It belongs to the universal ribosomal protein uS14 family. Zinc-binding uS14 subfamily. Part of the 30S ribosomal subunit. Zn(2+) serves as cofactor.

In terms of biological role, binds 16S rRNA, required for the assembly of 30S particles. The chain is Small ribosomal subunit protein uS14 from Thermoplasma volcanium (strain ATCC 51530 / DSM 4299 / JCM 9571 / NBRC 15438 / GSS1).